We begin with the raw amino-acid sequence, 621 residues long: DDB1- and CUL4-associated factor 10 homolog (621 aa).

WD repeat units follow at residues 46–85, 89–127, 131–170, and 176–215; these read GRTG…EIFK, AHTD…QKLR, GHSN…EQGL, and FHAS…TLHK. Disordered regions lie at residues 305–349 and 437–483; these read VRSE…PRQA and LMGS…TTVR. A Phosphoserine modification is found at Ser-307. Positions 324 to 342 are enriched in polar residues; sequence STTLASRSSLNESQDQDTV. Low complexity predominate over residues 454–478; it reads ESNQSSSSSSSSSSSSSSSSSSNNS. Ser-494 and Ser-497 each carry phosphoserine. The stretch at 588–621 is one WD 5 repeat; sequence EHQDVVLCAKFSPREPLLVTGCNGGEVTWYRPNL.

This sequence belongs to the WD repeat DCAF10 family.

The chain is DDB1- and CUL4-associated factor 10 homolog from Drosophila melanogaster (Fruit fly).